Reading from the N-terminus, the 144-residue chain is MSGLAKYLPGATNLLSKSGEVSLGSLVGKTVFLYFSASWCPPCRGFTPVLAEFYEKHHVAKNFEVVLISWDENESDFHDYYGKMPWLALPFDQRSTVSELGKTFGVESIPTLITINADTGAIIGTQARTRVIEDPDGANFPWPN.

The 143-residue stretch at 2-144 (SGLAKYLPGA…PDGANFPWPN (143 aa)) folds into the Thioredoxin domain. Cys40 and Cys43 are disulfide-bonded.

It belongs to the thioredoxin family.

Functionally, acts as a thiol-disulfide oxidoreductase. It is spontaneously reduced by trypanothione. The polypeptide is Tryparedoxin (Trypanosoma brucei brucei).